Reading from the N-terminus, the 404-residue chain is Probable oxalate decarboxylase ARB_04859 (404 aa).

Positions 1–17 are cleaved as a signal peptide; that stretch reads MKYSAVLVAALAAIADA. Residues 74–215 enclose the Cupin type-1 1 domain; that stretch reads FSLSKTRMLY…NFGVPPSTFD (142 aa). Histidine 117, histidine 119, glutamate 123, and histidine 162 together coordinate Mn(2+). 2 N-linked (GlcNAc...) asparagine glycosylation sites follow: asparagine 226 and asparagine 244. Positions 249–393 constitute a Cupin type-1 2 domain; that stretch reads FHISNAPEIQ…AINVPIEVIE (145 aa). 4 residues coordinate Mn(2+): histidine 296, histidine 298, glutamate 303, and histidine 342. An N-linked (GlcNAc...) asparagine glycan is attached at asparagine 346. Catalysis depends on glutamate 357, which acts as the Proton donor.

It depends on Mn(2+) as a cofactor.

The protein localises to the secreted. The catalysed reaction is oxalate + H(+) = formate + CO2. In terms of biological role, converts oxalate to formate and CO(2) in an O(2)-dependent reaction. Can also catalyze minor side reactions: oxalate oxidation to produce H(2)O(2), and oxalate-dependent, H(2)O(2)-independent dye oxidations. The polypeptide is Probable oxalate decarboxylase ARB_04859 (Arthroderma benhamiae (strain ATCC MYA-4681 / CBS 112371) (Trichophyton mentagrophytes)).